The primary structure comprises 119 residues: Iron-sulfur cluster insertion protein ErpA (119 aa).

Iron-sulfur cluster-binding residues include C47, C111, and C113.

The protein belongs to the HesB/IscA family. Homodimer. Requires iron-sulfur cluster as cofactor.

Required for insertion of 4Fe-4S clusters for at least IspG. The chain is Iron-sulfur cluster insertion protein ErpA from Blochmanniella floridana.